A 707-amino-acid polypeptide reads, in one-letter code: Polyribonucleotide nucleotidyltransferase (707 aa).

Mg(2+)-binding residues include Asp485 and Asp491. The KH domain occupies 552 to 615 (PRITVINIPK…AAIKWIKGIV (64 aa)). Residues 621 to 689 (GEIYEGKVVK…DRGKVKLSMK (69 aa)) form the S1 motif domain.

This sequence belongs to the polyribonucleotide nucleotidyltransferase family. It depends on Mg(2+) as a cofactor.

The protein localises to the cytoplasm. The enzyme catalyses RNA(n+1) + phosphate = RNA(n) + a ribonucleoside 5'-diphosphate. Functionally, involved in mRNA degradation. Catalyzes the phosphorolysis of single-stranded polyribonucleotides processively in the 3'- to 5'-direction. This is Polyribonucleotide nucleotidyltransferase from Rhodospirillum centenum (strain ATCC 51521 / SW).